Consider the following 122-residue polypeptide: Urease subunit beta (122 aa).

Residues 92-122 (GLRPEYAGELDGRGHEPTAPNYGEKGQGHFE) form a disordered region.

The protein belongs to the urease beta subunit family. As to quaternary structure, heterotrimer of UreA (gamma), UreB (beta) and UreC (alpha) subunits. Three heterotrimers associate to form the active enzyme.

The protein resides in the cytoplasm. The enzyme catalyses urea + 2 H2O + H(+) = hydrogencarbonate + 2 NH4(+). Its pathway is nitrogen metabolism; urea degradation; CO(2) and NH(3) from urea (urease route): step 1/1. The protein is Urease subunit beta of Saccharopolyspora erythraea (strain ATCC 11635 / DSM 40517 / JCM 4748 / NBRC 13426 / NCIMB 8594 / NRRL 2338).